A 206-amino-acid chain; its full sequence is Ribosomal RNA small subunit methyltransferase G (206 aa).

S-adenosyl-L-methionine is bound by residues glycine 73, leucine 78, 124–125, and arginine 139; that span reads VE.

It belongs to the methyltransferase superfamily. RNA methyltransferase RsmG family.

The protein resides in the cytoplasm. It carries out the reaction guanosine(527) in 16S rRNA + S-adenosyl-L-methionine = N(7)-methylguanosine(527) in 16S rRNA + S-adenosyl-L-homocysteine. Functionally, specifically methylates the N7 position of guanine in position 527 of 16S rRNA. The chain is Ribosomal RNA small subunit methyltransferase G from Photorhabdus laumondii subsp. laumondii (strain DSM 15139 / CIP 105565 / TT01) (Photorhabdus luminescens subsp. laumondii).